Consider the following 125-residue polypeptide: Ribosome-binding factor A (125 aa).

The protein belongs to the RbfA family. In terms of assembly, monomer. Binds 30S ribosomal subunits, but not 50S ribosomal subunits or 70S ribosomes.

The protein localises to the cytoplasm. One of several proteins that assist in the late maturation steps of the functional core of the 30S ribosomal subunit. Associates with free 30S ribosomal subunits (but not with 30S subunits that are part of 70S ribosomes or polysomes). Required for efficient processing of 16S rRNA. May interact with the 5'-terminal helix region of 16S rRNA. This Xylella fastidiosa (strain M12) protein is Ribosome-binding factor A.